The sequence spans 419 residues: S-adenosylmethionine synthase (419 aa).

Residue H15 coordinates ATP. Residue D17 coordinates Mg(2+). E43 is a binding site for K(+). Positions 56 and 100 each coordinate L-methionine. A flexible loop region spans residues Q100 to E110. ATP contacts are provided by residues D171–K173, K248–F249, D257, R263–K264, A280, and K284. Residue D257 participates in L-methionine binding. K288 serves as a coordination point for L-methionine.

It belongs to the AdoMet synthase family. Homotetramer; dimer of dimers. Mg(2+) is required as a cofactor. K(+) serves as cofactor.

The protein localises to the cytoplasm. It carries out the reaction L-methionine + ATP + H2O = S-adenosyl-L-methionine + phosphate + diphosphate. The protein operates within amino-acid biosynthesis; S-adenosyl-L-methionine biosynthesis; S-adenosyl-L-methionine from L-methionine: step 1/1. Its function is as follows. Catalyzes the formation of S-adenosylmethionine (AdoMet) from methionine and ATP. The overall synthetic reaction is composed of two sequential steps, AdoMet formation and the subsequent tripolyphosphate hydrolysis which occurs prior to release of AdoMet from the enzyme. The chain is S-adenosylmethionine synthase from Synechococcus sp. (strain WH7803).